A 441-amino-acid chain; its full sequence is ATP-dependent protease ATPase subunit HslU (441 aa).

ATP contacts are provided by residues Ile-18, 60–65 (GVGKTE), Asp-254, Glu-319, and Arg-391.

The protein belongs to the ClpX chaperone family. HslU subfamily. In terms of assembly, a double ring-shaped homohexamer of HslV is capped on each side by a ring-shaped HslU homohexamer. The assembly of the HslU/HslV complex is dependent on binding of ATP.

It localises to the cytoplasm. Functionally, ATPase subunit of a proteasome-like degradation complex; this subunit has chaperone activity. The binding of ATP and its subsequent hydrolysis by HslU are essential for unfolding of protein substrates subsequently hydrolyzed by HslV. HslU recognizes the N-terminal part of its protein substrates and unfolds these before they are guided to HslV for hydrolysis. The chain is ATP-dependent protease ATPase subunit HslU from Shewanella loihica (strain ATCC BAA-1088 / PV-4).